Here is a 280-residue protein sequence, read N- to C-terminus: MKQHTLAEAIAHTGVGLHSGVSTHVRILPADAGSGRYFVRVDLPDSPIIPAQVAAVSQTVLSTQLGKGEAGVRTVEHLLAALAGMGVDNARIEIDGSEVPLLDGSAQEWVKSIAEVGLVTQAVTDNTVSWDIPEPIWIHQDDAFVAAIPASETRFSYGIDFDLPAIGNQWYSWPLTTESDTSFAKEVAPARTFGLLHQIEYLQKSGLIKGGSLDNALVCGPDGWVNPPLRFANEPVRHKILDLVGDLSLLGYFPRAHFLAYKASHNLHIQLAQRILALSN.

Zn(2+)-binding residues include His77, His238, and Asp242. His265 serves as the catalytic Proton donor.

This sequence belongs to the LpxC family. The cofactor is Zn(2+).

The enzyme catalyses a UDP-3-O-[(3R)-3-hydroxyacyl]-N-acetyl-alpha-D-glucosamine + H2O = a UDP-3-O-[(3R)-3-hydroxyacyl]-alpha-D-glucosamine + acetate. It functions in the pathway glycolipid biosynthesis; lipid IV(A) biosynthesis; lipid IV(A) from (3R)-3-hydroxytetradecanoyl-[acyl-carrier-protein] and UDP-N-acetyl-alpha-D-glucosamine: step 2/6. Functionally, catalyzes the hydrolysis of UDP-3-O-myristoyl-N-acetylglucosamine to form UDP-3-O-myristoylglucosamine and acetate, the committed step in lipid A biosynthesis. This chain is UDP-3-O-acyl-N-acetylglucosamine deacetylase, found in Trichormus variabilis (strain ATCC 29413 / PCC 7937) (Anabaena variabilis).